Consider the following 543-residue polypeptide: Chaperonin GroEL (543 aa).

Residues 29–32 (TLGP), 86–90 (DGTTT), Gly413, 478–480 (NAA), and Asp494 each bind ATP.

It belongs to the chaperonin (HSP60) family. As to quaternary structure, forms a cylinder of 14 subunits composed of two heptameric rings stacked back-to-back. Interacts with the co-chaperonin GroES.

The protein localises to the cytoplasm. The catalysed reaction is ATP + H2O + a folded polypeptide = ADP + phosphate + an unfolded polypeptide.. Its function is as follows. Together with its co-chaperonin GroES, plays an essential role in assisting protein folding. The GroEL-GroES system forms a nano-cage that allows encapsulation of the non-native substrate proteins and provides a physical environment optimized to promote and accelerate protein folding. The polypeptide is Chaperonin GroEL (Lactobacillus gasseri (strain ATCC 33323 / DSM 20243 / BCRC 14619 / CIP 102991 / JCM 1131 / KCTC 3163 / NCIMB 11718 / NCTC 13722 / AM63)).